Reading from the N-terminus, the 83-residue chain is Toxin BmKBT (83 aa).

Residues 1 to 19 (MKAALLLVIFSLMLIGVLT) form the signal peptide. The 61-residue stretch at 21-81 (KSGYPTDHEG…TWSRATNKCR (61 aa)) folds into the LCN-type CS-alpha/beta domain. Intrachain disulfides connect C31/C80, C35/C54, C41/C61, and C45/C63. Residue K83 is a propeptide, removed by a carboxypeptidase.

It belongs to the long (4 C-C) scorpion toxin superfamily. Sodium channel inhibitor family. Beta subfamily. As to expression, expressed by the venom gland.

Its subcellular location is the secreted. In terms of biological role, this toxin increases the peak sodium current, slows down the inactivation of sodium channels (Nav), and prolongs the action potential of dorsal root ganglion neurons, which indicates that it behaves as a classical alpha-toxin. It binds to mammal brain and insect sodium channels, but with a different manner. This peptide may bind to a distinct receptor site on mammal brain sodium channels, which is unconnected with that for BmKAS (a beta-toxin), BmKIT2 (a beta-toxin) or BmK I (an alpha toxin). In contrast, the receptor site for BmKabT on insect sodium channels might be closely related to that for the beta-insect depressant toxin BmKIT2. Possesses potent toxicity in mice but induces only paralysis in cotton bollworm. In Olivierus martensii (Manchurian scorpion), this protein is Toxin BmKBT.